A 478-amino-acid chain; its full sequence is tRNA(Ile)-lysidine synthase (478 aa).

Residue 27–32 (SGGSDS) coordinates ATP.

This sequence belongs to the tRNA(Ile)-lysidine synthase family.

The protein resides in the cytoplasm. It carries out the reaction cytidine(34) in tRNA(Ile2) + L-lysine + ATP = lysidine(34) in tRNA(Ile2) + AMP + diphosphate + H(+). In terms of biological role, ligates lysine onto the cytidine present at position 34 of the AUA codon-specific tRNA(Ile) that contains the anticodon CAU, in an ATP-dependent manner. Cytidine is converted to lysidine, thus changing the amino acid specificity of the tRNA from methionine to isoleucine. In Rickettsia africae (strain ESF-5), this protein is tRNA(Ile)-lysidine synthase.